A 338-amino-acid polypeptide reads, in one-letter code: Probable tRNA pseudouridine synthase B (338 aa).

D78 acts as the Nucleophile in catalysis. The 76-residue stretch at 245 to 320 folds into the PUA domain; that stretch reads LPKIILRDSA…IAASPIRVLM (76 aa).

This sequence belongs to the pseudouridine synthase TruB family. Type 2 subfamily.

The enzyme catalyses uridine(55) in tRNA = pseudouridine(55) in tRNA. In terms of biological role, could be responsible for synthesis of pseudouridine from uracil-55 in the psi GC loop of transfer RNAs. This chain is Probable tRNA pseudouridine synthase B, found in Methanosarcina acetivorans (strain ATCC 35395 / DSM 2834 / JCM 12185 / C2A).